The sequence spans 257 residues: Short-chain dehydrogenase reductase 3b (257 aa).

Residue 12-36 (IITGGASGIGAESVRLFTEHGARVV) coordinates NAD(+). Ser144 contacts substrate. Tyr157 serves as the catalytic Proton acceptor.

Belongs to the short-chain dehydrogenases/reductases (SDR) family.

This Arabidopsis thaliana (Mouse-ear cress) protein is Short-chain dehydrogenase reductase 3b (SDR3b).